We begin with the raw amino-acid sequence, 235 residues long: Secretory carrier-associated membrane protein 5A (235 aa).

Residues 1–39 (MSDKPNNFPPLPRFIPLKPCFYQDFDTDIPDLHRTTAKR) lie on the Cytoplasmic side of the membrane. The helical transmembrane segment at 40 to 60 (LYYLWMLNSITLGVNLIGCLA) threads the bilayer. Residues 61-67 (WLIGGGS) are Extracellular-facing. The chain crosses the membrane as a helical span at residues 68–88 (ATNFGLAFLWLILFTPCSYVC). Over 89-102 (WFRPIYKAFKTDSS) the chain is Cytoplasmic. A helical membrane pass occupies residues 103-125 (FNFMAFFFTFTAQLVISIIQAVG). Residues 126–148 (IPGWGVCGWIASISFFGTNVGSA) lie on the Extracellular side of the membrane. Residues 149–169 (VVMLIPTIMFTAVAVLSFVAL) form a helical membrane-spanning segment. Topologically, residues 170–235 (TKVHRFYRGA…TPNYGYSNEM (66 aa)) are cytoplasmic.

The protein belongs to the SCAMP family. SCAMP5 subfamily.

It localises to the cell membrane. Its subcellular location is the golgi apparatus membrane. It is found in the golgi apparatus. The protein resides in the trans-Golgi network membrane. The protein localises to the recycling endosome membrane. It localises to the cytoplasmic vesicle. Its subcellular location is the secretory vesicle. It is found in the synaptic vesicle membrane. In terms of biological role, required for the calcium-dependent exocytosis of signal sequence-containing cytokines. Probably acts in cooperation with the SNARE machinery. This Xenopus laevis (African clawed frog) protein is Secretory carrier-associated membrane protein 5A (scamp5-a).